We begin with the raw amino-acid sequence, 401 residues long: Succinyl-diaminopimelate desuccinylase (401 aa).

Residue histidine 71 coordinates Zn(2+). Aspartate 73 is an active-site residue. A Zn(2+)-binding site is contributed by aspartate 104. The active-site Proton acceptor is glutamate 138. Residues glutamate 139, glutamate 167, and histidine 352 each contribute to the Zn(2+) site.

Belongs to the peptidase M20A family. DapE subfamily. Homodimer. Zn(2+) serves as cofactor. Co(2+) is required as a cofactor.

It catalyses the reaction N-succinyl-(2S,6S)-2,6-diaminopimelate + H2O = (2S,6S)-2,6-diaminopimelate + succinate. It functions in the pathway amino-acid biosynthesis; L-lysine biosynthesis via DAP pathway; LL-2,6-diaminopimelate from (S)-tetrahydrodipicolinate (succinylase route): step 3/3. Catalyzes the hydrolysis of N-succinyl-L,L-diaminopimelic acid (SDAP), forming succinate and LL-2,6-diaminopimelate (DAP), an intermediate involved in the bacterial biosynthesis of lysine and meso-diaminopimelic acid, an essential component of bacterial cell walls. The chain is Succinyl-diaminopimelate desuccinylase from Wolbachia sp. subsp. Brugia malayi (strain TRS).